The following is a 446-amino-acid chain: Phosphoglucosamine mutase (446 aa).

Ser-99 serves as the catalytic Phosphoserine intermediate. Mg(2+)-binding residues include Ser-99, Asp-242, Asp-244, and Asp-246. Ser-99 bears the Phosphoserine mark.

Belongs to the phosphohexose mutase family. Mg(2+) is required as a cofactor. Post-translationally, activated by phosphorylation.

It carries out the reaction alpha-D-glucosamine 1-phosphate = D-glucosamine 6-phosphate. In terms of biological role, catalyzes the conversion of glucosamine-6-phosphate to glucosamine-1-phosphate. This Campylobacter curvus (strain 525.92) protein is Phosphoglucosamine mutase.